The chain runs to 272 residues: Phosphatidylglycerol--prolipoprotein diacylglyceryl transferase (272 aa).

Helical transmembrane passes span Trp24–Ala44, Tyr59–Tyr79, Phe102–Phe122, and Gly129–Phe149. Residue Arg151 coordinates a 1,2-diacyl-sn-glycero-3-phospho-(1'-sn-glycerol). The next 3 membrane-spanning stretches (helical) occupy residues Pro180–Trp200, Gly208–Trp228, and Met244–Ala264.

The protein belongs to the Lgt family.

The protein resides in the cell inner membrane. The enzyme catalyses L-cysteinyl-[prolipoprotein] + a 1,2-diacyl-sn-glycero-3-phospho-(1'-sn-glycerol) = an S-1,2-diacyl-sn-glyceryl-L-cysteinyl-[prolipoprotein] + sn-glycerol 1-phosphate + H(+). Its pathway is protein modification; lipoprotein biosynthesis (diacylglyceryl transfer). Its function is as follows. Catalyzes the transfer of the diacylglyceryl group from phosphatidylglycerol to the sulfhydryl group of the N-terminal cysteine of a prolipoprotein, the first step in the formation of mature lipoproteins. The sequence is that of Phosphatidylglycerol--prolipoprotein diacylglyceryl transferase from Wolinella succinogenes (strain ATCC 29543 / DSM 1740 / CCUG 13145 / JCM 31913 / LMG 7466 / NCTC 11488 / FDC 602W) (Vibrio succinogenes).